The primary structure comprises 297 residues: Protein phosphatase PTC7 homolog (297 aa).

Residues 1–27 constitute a mitochondrion transit peptide; that stretch reads MLSVLSYGRLVARAVIGGLSQTDSRDY. Positions 28-292 constitute a PPM-type phosphatase domain; sequence SLVSASFGFG…DDITVLLSIV (265 aa). Residues D71, G72, and D216 each coordinate Mn(2+).

The protein belongs to the PP2C family. The cofactor is Mg(2+). Mn(2+) is required as a cofactor.

The protein localises to the mitochondrion matrix. The enzyme catalyses O-phospho-L-seryl-[protein] + H2O = L-seryl-[protein] + phosphate. The catalysed reaction is O-phospho-L-threonyl-[protein] + H2O = L-threonyl-[protein] + phosphate. Protein phosphatase which positively regulates biosynthesis of the ubiquinone, coenzyme Q. Dephosphorylates the ubiquinone biosynthesis protein coq7 which is likely to lead to its activation. The sequence is that of Protein phosphatase PTC7 homolog (pptc7) from Danio rerio (Zebrafish).